The primary structure comprises 327 residues: Cytochrome P450 2C42 (327 aa).

A heme-binding site is contributed by Cys272.

The protein belongs to the cytochrome P450 family. Heme serves as cofactor.

The protein resides in the endoplasmic reticulum membrane. Its subcellular location is the microsome membrane. The enzyme catalyses an organic molecule + reduced [NADPH--hemoprotein reductase] + O2 = an alcohol + oxidized [NADPH--hemoprotein reductase] + H2O + H(+). In terms of biological role, cytochromes P450 are a group of heme-thiolate monooxygenases. In liver microsomes, this enzyme is involved in an NADPH-dependent electron transport pathway. It oxidizes a variety of structurally unrelated compounds, including steroids, fatty acids, and xenobiotics. The polypeptide is Cytochrome P450 2C42 (CYP2C42) (Sus scrofa (Pig)).